The following is a 103-amino-acid chain: Small ribosomal subunit protein uS10 (103 aa).

This sequence belongs to the universal ribosomal protein uS10 family. Part of the 30S ribosomal subunit.

Involved in the binding of tRNA to the ribosomes. The chain is Small ribosomal subunit protein uS10 from Chlorobium limicola (strain DSM 245 / NBRC 103803 / 6330).